Consider the following 1264-residue polypeptide: Box A-binding factor (1264 aa).

The segment covering 1–11 (MTKTTKPKEKA) has biased composition (basic and acidic residues). 6 disordered regions span residues 1 to 25 (MTKTTKPKEKAAAGGAVIGSGSGLG), 161 to 200 (TASDTAATSEAAIDDDPSAINTNNNNNNSKAQNDASESVK), 234 to 253 (LISHHQQEQHQQAQQQQHQQ), 405 to 463 (QLHQ…HALS), 523 to 585 (NQTQ…SAAT), and 599 to 627 (HNSSLEDGYGSPRSSHSGGGGGGTLPAFQ). Gly residues predominate over residues 16–25 (AVIGSGSGLG). The segment covering 161 to 171 (TASDTAATSEA) has biased composition (low complexity). Polar residues predominate over residues 189-198 (SKAQNDASES). Positions 409–421 (QQHHHQQQLHHHQ) are enriched in basic residues. Low complexity-rich tracts occupy residues 422 to 438 (QQQQQLYHQQQQQQQQQ), 447 to 459 (STSSAGGDSPSSS), and 523 to 554 (NQTQAHLQQQHHQQQQQQHQQHQQQQLQQQQQ). Positions 555–564 (QHHHNQHQHH) are enriched in basic residues. 2 stretches are compositionally biased toward low complexity: residues 565–585 (NSSSSSPGPAGLHHSSSSAAT) and 599–614 (HNSSLEDGYGSPRSSH). Residues 803–827 (CSNCHTTHTSLWRRNPAGEPVCNAC) form a GATA-type zinc finger. Disordered regions lie at residues 841–867 (TMKKDTIQKRKRKPKGTKSEKSKSKSK), 899–1048 (DDMK…SNEN), and 1181–1202 (EEMDQSQQQQQQQQHQQQQHGE). 2 stretches are compositionally biased toward low complexity: residues 909–950 (PYNS…GSTS) and 985–1007 (QMSPLNMQQHQQQQSCSMQHSPS). The segment covering 1008–1023 (TPTSIFNTPSPTHQLH) has biased composition (polar residues). Low complexity-rich tracts occupy residues 1024–1048 (NNNNNNNNSSIFNNNNNNNSSSNEN) and 1185–1200 (QSQQQQQQQQHQQQQH). 2 positions are modified to phosphoserine: Ser-1208 and Ser-1210.

In terms of assembly, interacts (via GATA-type Zn-finger domain) with Bfc; this interaction enhances srp binding to the promoter of crq/croquemort.

Its subcellular location is the nucleus. May function as a transcriptional activator protein and may play a key role in the organogenesis of the fat body. Binds a sequence element (5'-[TA]GATAA-3') found in the larval promoters of all known alcohol dehydrogenase (ADH) genes. Acts as a homeotic gene downstream of the terminal gap gene HKB to promote morphogenesis and differentiation of anterior and posterior midgut. Together with transcriptional cofactor Bfc directly binds the promoter of phagocytic receptor crq/croquemort to upregulate its expression and stimulate efferocytosis in response to apoptotic cells, including during embryogenesis. This chain is Box A-binding factor (srp), found in Drosophila melanogaster (Fruit fly).